A 478-amino-acid chain; its full sequence is Antiviral innate immune response effector IFIT1 (478 aa).

6 TPR repeats span residues 52–85, 95–128, 141–174, 183–216, 218–249, and 251–284; these read VGIHNLLAYVKHLKGQNEEALKSLKEAENLMQEE, LVTWGNFAWMYYHMGRLAEAQTYLDKVENICKKL, IDCEEGWALLKCGGKNYERAKACFEKVLEVDPEN, ISAYRLDGFKLATKNHKPFSLLPLRQAVRLNPDN, YIKVLLALKLQDEGQEAEGEKYIEEALANMSS, and TYVFRYAAKFYRRKGSVDKALELLKKALQETPTS. Position 147 (Trp-147) interacts with mRNA. Gly-190 lines the RNA pocket. Residues Lys-259, His-289, Gln-290, and Lys-336 each coordinate RNA. TPR repeat units follow at residues 305-339, 340-373, 378-412, and 437-470; these read ATKGQPRGQNREKLDKMIRSAIFHFESAVEKKPTF, EVAHLDLARMYIEAGNHRKAEENFQKLLCMKPVV, QDIHFHYGRFQEFQKKSDVNAIIHYLKAIKIEQAS, and LESLSLLGFVYKLEGNMNEALEYYERALRLAADF.

It belongs to the IFIT family. In terms of assembly, component of an interferon-dependent multiprotein complex, at least composed of IFIT1, IFIT2 and IFIT3. Interacts (via TPR repeats 1-4) with RPL15. Interacts with STING1/MITA; could disrupt STING1 interaction with MAVS or TBK1, acting as a negative-feedback regulator of virus-triggered signaling. Interacts with EIF3E; this could be an alternative way to inhibit translation. Post-translationally, phosphorylated. In terms of processing, ISGylated.

The protein localises to the cytoplasm. In terms of biological role, plays a key role in the innate immune response as part of an interferon-dependent multiprotein complex, recognizing and sequestering viral RNAs that lack host-specific 2'-O-methylation at their 5' cap. By distinguishing these RNAs from host mRNAs, inhibits their translation by competing with the translation initiation factor eIF4E. Could also prevent viral replication through its interaction with DNA replication origin-binding protein E1 of several viruses. Causes the translocation of E1 from the nucleus to the cytoplasm and can also inhibit its helicase activity in vitro. Exhibits antiviral activity against many viruses from the Flaviviridae (West Nile virus, Dengue virus, hepatitis C virus), Coronaviridae (human 229E coronavirus, SARS-CoV-2 and SARS-CoV), Poxviridae (vaccinia virus) and Togaviridae (Sindbis virus) families. In Homo sapiens (Human), this protein is Antiviral innate immune response effector IFIT1.